The chain runs to 389 residues: WAT1-related protein At1g21890 (389 aa).

10 helical membrane-spanning segments follow: residues 13–33 (LAMISMQFGYAGMYIITMVSL), 40–60 (YVLAVYRHAIATAVIAPFALF), 73–93 (IFLQIALLGFIEPVLDQNLYY), 102–122 (TFASATANVLPAITFVLAIIF), 142–162 (VITVSGALLMTLYKGPIVDFI), 191–211 (WIPGTLMLLGRTFGWAGFFIL), 225–245 (LTTLICLMGTLEGTAVSLVTV), 260–280 (FAAAYSGVICSGVAYYVQGVV), 287–307 (VFVATFNPLCVVITAALGVVV), and 312–332 (IHLGSVIGTLFIIVGLYTVVW). 2 consecutive EamA domains span residues 23–150 (AGMY…GALL) and 205–331 (WAGF…YTVV). The interval 339 to 361 (RMTDDDEDCKGLPIKSPVKPVDT) is disordered.

The protein belongs to the drug/metabolite transporter (DMT) superfamily. Plant drug/metabolite exporter (P-DME) (TC 2.A.7.4) family.

It is found in the membrane. The chain is WAT1-related protein At1g21890 from Arabidopsis thaliana (Mouse-ear cress).